A 325-amino-acid polypeptide reads, in one-letter code: Probable conjugal transfer protein TrbB (325 aa).

Glycine 151–threonine 158 serves as a coordination point for ATP.

It belongs to the GSP E family.

The protein localises to the cytoplasm. In Sinorhizobium fredii (strain NBRC 101917 / NGR234), this protein is Probable conjugal transfer protein TrbB (trbB).